Consider the following 223-residue polypeptide: Deoxyribose-phosphate aldolase (223 aa).

The active-site Proton donor/acceptor is D89. K152 acts as the Schiff-base intermediate with acetaldehyde in catalysis. K181 functions as the Proton donor/acceptor in the catalytic mechanism.

This sequence belongs to the DeoC/FbaB aldolase family. DeoC type 1 subfamily.

Its subcellular location is the cytoplasm. It catalyses the reaction 2-deoxy-D-ribose 5-phosphate = D-glyceraldehyde 3-phosphate + acetaldehyde. It functions in the pathway carbohydrate degradation; 2-deoxy-D-ribose 1-phosphate degradation; D-glyceraldehyde 3-phosphate and acetaldehyde from 2-deoxy-alpha-D-ribose 1-phosphate: step 2/2. Catalyzes a reversible aldol reaction between acetaldehyde and D-glyceraldehyde 3-phosphate to generate 2-deoxy-D-ribose 5-phosphate. This chain is Deoxyribose-phosphate aldolase, found in Listeria monocytogenes serovar 1/2a (strain ATCC BAA-679 / EGD-e).